The primary structure comprises 106 residues: L-rhamnose mutarotase (106 aa).

Y20 is a binding site for substrate. H24 acts as the Proton donor in catalysis. Residues Y43 and 78–79 contribute to the substrate site; that span reads WW.

It belongs to the rhamnose mutarotase family. As to quaternary structure, homodimer.

It localises to the cytoplasm. The enzyme catalyses alpha-L-rhamnose = beta-L-rhamnose. It participates in carbohydrate metabolism; L-rhamnose metabolism. Its function is as follows. Involved in the anomeric conversion of L-rhamnose. This Rhizobium etli (strain ATCC 51251 / DSM 11541 / JCM 21823 / NBRC 15573 / CFN 42) protein is L-rhamnose mutarotase.